Here is a 107-residue protein sequence, read N- to C-terminus: Putative double-stranded DNA mimic protein YE2228 (107 aa).

This sequence belongs to the putative dsDNA mimic protein family.

May act as a double-stranded DNA (dsDNA) mimic. Probably regulates the activity of a dsDNA-binding protein. The polypeptide is Putative double-stranded DNA mimic protein YE2228 (Yersinia enterocolitica serotype O:8 / biotype 1B (strain NCTC 13174 / 8081)).